Here is a 285-residue protein sequence, read N- to C-terminus: 2-dehydro-3-deoxyphosphooctonate aldolase (285 aa).

It belongs to the KdsA family.

It localises to the cytoplasm. The catalysed reaction is D-arabinose 5-phosphate + phosphoenolpyruvate + H2O = 3-deoxy-alpha-D-manno-2-octulosonate-8-phosphate + phosphate. It participates in carbohydrate biosynthesis; 3-deoxy-D-manno-octulosonate biosynthesis; 3-deoxy-D-manno-octulosonate from D-ribulose 5-phosphate: step 2/3. The protein operates within bacterial outer membrane biogenesis; lipopolysaccharide biosynthesis. This is 2-dehydro-3-deoxyphosphooctonate aldolase from Methylibium petroleiphilum (strain ATCC BAA-1232 / LMG 22953 / PM1).